Reading from the N-terminus, the 122-residue chain is NADPH-dependent 7-cyano-7-deazaguanine reductase (122 aa).

C34 serves as the catalytic Thioimide intermediate. Catalysis depends on D41, which acts as the Proton donor. Substrate-binding positions include 56–58 (VEL) and 75–76 (HE).

This sequence belongs to the GTP cyclohydrolase I family. QueF type 1 subfamily.

The protein localises to the cytoplasm. It carries out the reaction 7-aminomethyl-7-carbaguanine + 2 NADP(+) = 7-cyano-7-deazaguanine + 2 NADPH + 3 H(+). It participates in tRNA modification; tRNA-queuosine biosynthesis. Its function is as follows. Catalyzes the NADPH-dependent reduction of 7-cyano-7-deazaguanine (preQ0) to 7-aminomethyl-7-deazaguanine (preQ1). This is NADPH-dependent 7-cyano-7-deazaguanine reductase from Anaeromyxobacter dehalogenans (strain 2CP-1 / ATCC BAA-258).